Consider the following 393-residue polypeptide: MSQNLFNVEDYRKLRQKRLPKMVYDYLEGGAEDEYGVKHNRDVFQQWRFKPKRLVDVSRRSLQAEVLGKRQSMPLLIGPTGLNGALWPKGDLALARAATKAGIPFVLSTASNMSIEDLARQCDGDLWFQLYVIHREIAQGMVLKALHTGYTTLVLTTDVAVNGYRERDLHNRFKIPMSYSAKVVLDGCLHPRWSLDFVRHGMPQLANFVSSQTSSLEMQAALMSRQMDASFNWEALRWLRDLWPHKLLVKGLLSAEDADRCIAEGADGVILSNHGGRQLDCAISPMEVLAQSVAKTGKPVLIDSGFRRGSDIVKALALGAEAVLLGRATLYGLAARGETGVDEVLTLLKADIDRTLAQIGCPDITSLSPDYLQNEGVTNTAPVDHLIGKGTHA.

The FMN hydroxy acid dehydrogenase domain maps to 1 to 377 (MSQNLFNVED…SPDYLQNEGV (377 aa)). Tyr26 is a (S)-mandelate binding site. FMN contacts are provided by residues 79–81 (PTG), Ser108, and Gln129. A (S)-mandelate-binding site is contributed by Tyr131. Position 156 (Thr156) interacts with FMN. Arg165 is a (S)-mandelate binding site. Lys250 contacts FMN. (S)-mandelate is bound by residues His274 and Arg277. The active-site Proton acceptor is His274. FMN contacts are provided by residues 303-307 (DSGFR) and 326-327 (GR).

It belongs to the FMN-dependent alpha-hydroxy acid dehydrogenase family. As to quaternary structure, homotetramer. The cofactor is FMN.

The protein localises to the cell inner membrane. It carries out the reaction (S)-mandelate + A = phenylglyoxylate + AH2. The protein operates within aromatic compound metabolism; (R)-mandelate degradation; benzoate from (R)-mandelate: step 2/4. Catalyzes the dehydrogenation of (S)-mandelate to phenylglyoxylate (benzoylformate). Is likely involved in the utilization of mandelate as a sole source of carbon and energy for growth. Active in vitro with the artificial electron acceptors 2,6-dichlorophenolindophenol (DCPIP) or ferricyanide, but in vivo most likely transfer the electron pair from the reduced flavin to a component of the electron transport chain in the membrane, possibly a quinone. Shows very low activity with oxygen as the electron acceptor, and also with 3-indolelactate and medium chain 2-hydroxyacids as substrates. This is (S)-mandelate dehydrogenase from Pseudomonas putida (Arthrobacter siderocapsulatus).